The chain runs to 634 residues: Putative peptidoglycan O-acetyltransferase YrhL (634 aa).

The next 11 helical transmembrane spans lie at 10 to 30, 38 to 58, 79 to 99, 110 to 130, 145 to 165, 172 to 192, 244 to 264, 270 to 290, 307 to 327, 329 to 349, and 385 to 405; these read YIPG…TYHL, GFIG…SILL, RLLP…VLFD, AISS…LSYF, LAIE…GMYI, LAAV…VLYE, FLAF…EPFL, LFIS…SSFL, YGIY…QEIG, PVFW…ELSY, and MSIG…SGLA. Residues 413-481 are disordered; it reads KWTYSSQETN…SQQLKKPADT (69 aa). The segment covering 414 to 429 has biased composition (polar residues); the sequence is WTYSSQETNADTSQAS. 2 stretches are compositionally biased toward basic and acidic residues: residues 430-447 and 455-470; these read GDKK…EQKT and KENK…KKDT.

It belongs to the acyltransferase 3 family.

Its subcellular location is the cell membrane. The sequence is that of Putative peptidoglycan O-acetyltransferase YrhL (yrhL) from Bacillus subtilis (strain 168).